The chain runs to 353 residues: Holliday junction branch migration complex subunit RuvB (353 aa).

The large ATPase domain (RuvB-L) stretch occupies residues 4–185 (ADRLITAAGG…FGIVQRLEFY (182 aa)). Residues I24, R25, G66, K69, T70, T71, 132–134 (EDF), R175, Y185, and R222 contribute to the ATP site. T70 serves as a coordination point for Mg(2+). The interval 186 to 256 (NIADLSTIVS…TADKALNLLD (71 aa)) is small ATPAse domain (RuvB-S). Positions 259 to 353 (EHGFDHQDRR…DDVVDDPADL (95 aa)) are head domain (RuvB-H). 3 residues coordinate DNA: R295, R314, and R319.

This sequence belongs to the RuvB family. In terms of assembly, homohexamer. Forms an RuvA(8)-RuvB(12)-Holliday junction (HJ) complex. HJ DNA is sandwiched between 2 RuvA tetramers; dsDNA enters through RuvA and exits via RuvB. An RuvB hexamer assembles on each DNA strand where it exits the tetramer. Each RuvB hexamer is contacted by two RuvA subunits (via domain III) on 2 adjacent RuvB subunits; this complex drives branch migration. In the full resolvosome a probable DNA-RuvA(4)-RuvB(12)-RuvC(2) complex forms which resolves the HJ.

It is found in the cytoplasm. It carries out the reaction ATP + H2O = ADP + phosphate + H(+). In terms of biological role, the RuvA-RuvB-RuvC complex processes Holliday junction (HJ) DNA during genetic recombination and DNA repair, while the RuvA-RuvB complex plays an important role in the rescue of blocked DNA replication forks via replication fork reversal (RFR). RuvA specifically binds to HJ cruciform DNA, conferring on it an open structure. The RuvB hexamer acts as an ATP-dependent pump, pulling dsDNA into and through the RuvAB complex. RuvB forms 2 homohexamers on either side of HJ DNA bound by 1 or 2 RuvA tetramers; 4 subunits per hexamer contact DNA at a time. Coordinated motions by a converter formed by DNA-disengaged RuvB subunits stimulates ATP hydrolysis and nucleotide exchange. Immobilization of the converter enables RuvB to convert the ATP-contained energy into a lever motion, pulling 2 nucleotides of DNA out of the RuvA tetramer per ATP hydrolyzed, thus driving DNA branch migration. The RuvB motors rotate together with the DNA substrate, which together with the progressing nucleotide cycle form the mechanistic basis for DNA recombination by continuous HJ branch migration. Branch migration allows RuvC to scan DNA until it finds its consensus sequence, where it cleaves and resolves cruciform DNA. The chain is Holliday junction branch migration complex subunit RuvB from Pseudomonas savastanoi pv. phaseolicola (strain 1448A / Race 6) (Pseudomonas syringae pv. phaseolicola (strain 1448A / Race 6)).